The primary structure comprises 572 residues: DBH-like monooxygenase protein 2 homolog (572 aa).

Residues 1–26 (MGTCLKGNMSVLSLVLFLLSVQQFWA) form the signal peptide. 4 N-linked (GlcNAc...) asparagine glycosylation sites follow: Asn8, Asn64, Asn187, and Asn203. Residues 27–552 (QEDPLLPFSE…SPPEPCVRAC (526 aa)) are Extracellular-facing. The DOMON domain occupies 42-157 (HNVQLKWGFD…LPMKLIYAYG (116 aa)). Tyr207 is a catalytic residue. Cystine bridges form between Cys209–Cys256 and Cys244–Cys263. His237 and His238 together coordinate Cu cation. Residue His301 participates in Cu cation binding. Asn306 carries N-linked (GlcNAc...) asparagine glycosylation. Cystine bridges form between Cys358–Cys472 and Cys435–Cys457. His381 is an active-site residue. Cu cation is bound by residues His381, His383, and Met456. N-linked (GlcNAc...) asparagine glycans are attached at residues Asn468, Asn503, Asn518, and Asn534. The chain crosses the membrane as a helical span at residues 553-571 (ATKNLAFMSLFLCLAGMWA). Residue Ser572 is a topological domain, cytoplasmic.

This sequence belongs to the copper type II ascorbate-dependent monooxygenase family. Requires Cu(2+) as cofactor.

The protein resides in the membrane. The polypeptide is DBH-like monooxygenase protein 2 homolog (moxd2) (Danio rerio (Zebrafish)).